We begin with the raw amino-acid sequence, 872 residues long: Cadherin-1 (872 aa).

The signal sequence occupies residues 1–25 (MGLKRPWLLGAVVLLTLIQVQGGLA). A propeptide spanning residues 26-148 (EWTQCRMGFS…SETGLKRQKR (123 aa)) is cleaved from the precursor. Cadherin domains are found at residues 148–256 (RDWV…DPVF), 257–370 (TQSV…PPVF), 371–481 (DPTQ…APIF), 482–589 (LPPV…GPFL), and 605–688 (VFTI…MQCE). The Extracellular segment spans residues 149 to 701 (DWVIPPIIVS…AIAGGLGISA (553 aa)). Asn-209 is a glycosylation site (N-linked (GlcNAc...) asparagine). Residues Asp-251 and Asp-282 each coordinate Ca(2+). 4 N-linked (GlcNAc...) asparagine glycosylation sites follow: Asn-456, Asn-552, Asn-631, and Asn-669. Residues 702–722 (IVGILGGILALLLLLLLLLLF) form a helical membrane-spanning segment. Over 723–872 (VRRKKVVKEP…LADMYGGDED (150 aa)) the chain is Cytoplasmic. The segment at 739 to 758 (ETRDNVFSYDEEGGGEEDQD) is disordered. Positions 747–758 (YDEEGGGEEDQD) are enriched in acidic residues.

In terms of assembly, homodimer. As to expression, abundantly expressed in intestine, stomach, liver, kidney, skin and eye. Also expressed in heart, lung, testis, ovary, muscle and brain.

Its subcellular location is the cell junction. It localises to the adherens junction. The protein localises to the cell membrane. It is found in the endosome. The protein resides in the golgi apparatus. Its subcellular location is the trans-Golgi network. It localises to the cytoplasm. The protein localises to the desmosome. Functionally, cadherins are calcium-dependent cell adhesion proteins. They preferentially interact with themselves in a homophilic manner in connecting cells; cadherins may thus contribute to the sorting of heterogeneous cell types. Promotes organization of radial actin fiber structure and cellular response to contractile forces, via anchoring of radial actin fibers to CDH1 junction complexes at the cell membrane. E-cadherin is a ligand for integrin alpha-E/beta-7. The chain is Cadherin-1 (cdh1) from Xenopus laevis (African clawed frog).